The sequence spans 563 residues: Solute carrier family 22 member 6 (563 aa).

Over methionine 1–glutamine 9 the chain is Cytoplasmic. The chain crosses the membrane as a helical span at residues valine 10–leucine 30. Over methionine 31–glutamine 135 the chain is Extracellular. N-linked (GlcNAc...) asparagine glycans are attached at residues asparagine 39, asparagine 56, asparagine 92, asparagine 97, and asparagine 113. The helical transmembrane segment at leucine 136 to alanine 156 threads the bilayer. Residues aspartate 157–valine 164 are Cytoplasmic-facing. Residues leucine 165 to isoleucine 187 traverse the membrane as a helical segment. The Extracellular segment spans residues tyrosine 188–alanine 190. A helical membrane pass occupies residues phenylalanine 191–tryptophan 213. The Cytoplasmic portion of the chain corresponds to methionine 214 to threonine 224. Residues leucine 225–proline 245 form a helical membrane-spanning segment. The Extracellular segment spans residues histidine 246–arginine 248. The chain crosses the membrane as a helical span at residues histidine 249–isoleucine 269. At glutamate 270–histidine 337 the chain is on the cytoplasmic side. Residues leucine 338–methionine 358 form a helical membrane-spanning segment. Over aspartate 359–tyrosine 368 the chain is Extracellular. The helical transmembrane segment at leucine 369–isoleucine 389 threads the bilayer. Residues asparagine 390 to arginine 395 are Cytoplasmic-facing. Residues proline 396 to proline 416 traverse the membrane as a helical segment. At glutamine 417 to serine 425 the chain is on the extracellular side. The chain crosses the membrane as a helical span at residues leucine 426–glycine 446. At glutamate 447–glutamine 455 the chain is on the cytoplasmic side. A helical transmembrane segment spans residues threonine 456–valine 475. The Extracellular portion of the chain corresponds to serine 476–serine 484. A helical transmembrane segment spans residues methionine 485–proline 505. The Cytoplasmic portion of the chain corresponds to glutamate 506–leucine 563. Residues proline 525–leucine 563 are disordered.

Belongs to the major facilitator (TC 2.A.1) superfamily. Organic cation transporter (TC 2.A.1.19) family. Post-translationally, glycosylated. Glycosylation at Asn-113 may occur at a secondary level. Glycosylation is necessary for proper targeting of the transporter to the plasma membrane. In terms of tissue distribution, strongly expressed in kidney. Expressed at lower level in liver, skeletal muscle, brain and placenta. In kidney, found at the basolateral membrane of the proximal tubule. In testis, primarily localized to the basal membrane of Sertoli cells and weakly expressed in Leydig cells and vascular endothelial cells.

It is found in the basolateral cell membrane. The protein resides in the basal cell membrane. It catalyses the reaction (6R)-L-erythro-5,6,7,8-tetrahydrobiopterin(out) + a dicarboxylate(in) = (6R)-L-erythro-5,6,7,8-tetrahydrobiopterin(in) + a dicarboxylate(out). The enzyme catalyses L-erythro-7,8-dihydrobiopterin(out) + a dicarboxylate(in) = L-erythro-7,8-dihydrobiopterin(in) + a dicarboxylate(out). It carries out the reaction L-sepiapterin(out) + a dicarboxylate(in) = L-sepiapterin(in) + a dicarboxylate(out). The catalysed reaction is prostaglandin F2alpha(out) + a dicarboxylate(in) = prostaglandin F2alpha(in) + a dicarboxylate(out). It catalyses the reaction prostaglandin E2(out) + a dicarboxylate(in) = prostaglandin E2(in) + a dicarboxylate(out). The enzyme catalyses 3',5'-cyclic AMP(out) + a dicarboxylate(in) = 3',5'-cyclic AMP(in) + a dicarboxylate(out). It carries out the reaction 3',5'-cyclic GMP(out) + a dicarboxylate(in) = 3',5'-cyclic GMP(in) + a dicarboxylate(out). The catalysed reaction is urate(out) + a dicarboxylate(in) = urate(in) + a dicarboxylate(out). It catalyses the reaction kynurenate(out) + glutarate(in) = kynurenate(in) + glutarate(out). The enzyme catalyses (indol-3-yl)acetate(out) + a dicarboxylate(in) = (indol-3-yl)acetate(in) + a dicarboxylate(out). It carries out the reaction indoxyl sulfate(out) + a dicarboxylate(in) = indoxyl sulfate(in) + a dicarboxylate(out). The catalysed reaction is N-benzoylglycine(out) + a dicarboxylate(in) = N-benzoylglycine(in) + a dicarboxylate(out). It catalyses the reaction 3-carboxy-4-methyl-5-propyl-2-furanpropanoate(out) + a dicarboxylate(in) = 3-carboxy-4-methyl-5-propyl-2-furanpropanoate(in) + a dicarboxylate(out). Secondary active transporter that functions as a Na(+)-independent organic anion (OA)/dicarboxylate antiporter where the uptake of one molecule of OA into the cell is coupled with an efflux of one molecule of intracellular dicarboxylate such as 2-oxoglutarate or glutarate. Mediates the uptake of OA across the basolateral side of proximal tubule epithelial cells, thereby contributing to the renal elimination of endogenous OA from the systemic circulation into the urine. Functions as a biopterin transporters involved in the uptake and the secretion of coenzymes tetrahydrobiopterin (BH4), dihydrobiopterin (BH2) and sepiapterin to urine, thereby determining baseline levels of blood biopterins. Transports prostaglandin E2 (PGE2) and prostaglandin F2-alpha (PGF2-alpha) and may contribute to their renal excretion. Also mediates the uptake of cyclic nucleotides such as cAMP and cGMP. Involved in the transport of neuroactive tryptophan metabolites kynurenate (KYNA) and xanthurenate (XA) and may contribute to their secretion from the brain. May transport glutamate. Also involved in the disposition of uremic toxins and potentially toxic xenobiotics by the renal organic anion secretory pathway, helping reduce their undesired toxicological effects on the body. Uremic toxins include the indoxyl sulfate (IS), hippurate/N-benzoylglycine (HA), indole acetate (IA), 3-carboxy-4- methyl-5-propyl-2-furanpropionate (CMPF) and urate. Xenobiotics include the mycotoxin ochratoxin (OTA). May also contribute to the transport of organic compounds in testes across the blood-testis-barrier. This Homo sapiens (Human) protein is Solute carrier family 22 member 6.